The chain runs to 433 residues: Serine hydroxymethyltransferase (433 aa).

Residues Leu-132 and 136 to 138 (GHL) contribute to the (6S)-5,6,7,8-tetrahydrofolate site. The residue at position 241 (Lys-241) is an N6-(pyridoxal phosphate)lysine.

It belongs to the SHMT family. In terms of assembly, homodimer. It depends on pyridoxal 5'-phosphate as a cofactor.

It is found in the cytoplasm. The catalysed reaction is (6R)-5,10-methylene-5,6,7,8-tetrahydrofolate + glycine + H2O = (6S)-5,6,7,8-tetrahydrofolate + L-serine. It participates in one-carbon metabolism; tetrahydrofolate interconversion. It functions in the pathway amino-acid biosynthesis; glycine biosynthesis; glycine from L-serine: step 1/1. Catalyzes the reversible interconversion of serine and glycine with tetrahydrofolate (THF) serving as the one-carbon carrier. This reaction serves as the major source of one-carbon groups required for the biosynthesis of purines, thymidylate, methionine, and other important biomolecules. Also exhibits THF-independent aldolase activity toward beta-hydroxyamino acids, producing glycine and aldehydes, via a retro-aldol mechanism. The sequence is that of Serine hydroxymethyltransferase from Rhodopseudomonas palustris (strain BisA53).